Here is a 484-residue protein sequence, read N- to C-terminus: tRNA-2-methylthio-N(6)-dimethylallyladenosine synthase (484 aa).

The region spanning 29–149 (GVFHIHTLGC…LPKLLDQNRA (121 aa)) is the MTTase N-terminal domain. [4Fe-4S] cluster is bound by residues Cys38, Cys78, Cys112, Cys186, Cys190, and Cys193. In terms of domain architecture, Radical SAM core spans 172–401 (RASRISSWVA…VALQEQITEE (230 aa)). A TRAM domain is found at 404-474 (ATFEGRDVEV…RHNLLADPDV (71 aa)).

The protein belongs to the methylthiotransferase family. MiaB subfamily. In terms of assembly, monomer. The cofactor is [4Fe-4S] cluster.

It localises to the cytoplasm. The enzyme catalyses N(6)-dimethylallyladenosine(37) in tRNA + (sulfur carrier)-SH + AH2 + 2 S-adenosyl-L-methionine = 2-methylsulfanyl-N(6)-dimethylallyladenosine(37) in tRNA + (sulfur carrier)-H + 5'-deoxyadenosine + L-methionine + A + S-adenosyl-L-homocysteine + 2 H(+). Functionally, catalyzes the methylthiolation of N6-(dimethylallyl)adenosine (i(6)A), leading to the formation of 2-methylthio-N6-(dimethylallyl)adenosine (ms(2)i(6)A) at position 37 in tRNAs that read codons beginning with uridine. The chain is tRNA-2-methylthio-N(6)-dimethylallyladenosine synthase from Bifidobacterium longum subsp. infantis (strain ATCC 15697 / DSM 20088 / JCM 1222 / NCTC 11817 / S12).